A 52-amino-acid polypeptide reads, in one-letter code: U-scutigerotoxin(01)-Tl1a (52 aa).

The first 25 residues, 1–25 (MLAKAMSLLMMFLLVLVIGSVMVSA), serve as a signal peptide directing secretion.

This sequence belongs to the scutigerotoxin-01 family. Post-translationally, contains 1 disulfide bond. As to expression, expressed by the venom gland.

Its subcellular location is the secreted. In Thereuopoda longicornis (Long-legged centipede), this protein is U-scutigerotoxin(01)-Tl1a.